We begin with the raw amino-acid sequence, 686 residues long: Homoaconitase, mitochondrial (686 aa).

The transit peptide at Met-1–Ser-17 directs the protein to the mitochondrion. Residues Cys-337, Cys-401, and Cys-404 each coordinate [4Fe-4S] cluster.

This sequence belongs to the aconitase/IPM isomerase family. Requires [4Fe-4S] cluster as cofactor.

It localises to the mitochondrion. The catalysed reaction is (2R,3S)-homoisocitrate = cis-homoaconitate + H2O. It functions in the pathway amino-acid biosynthesis; L-lysine biosynthesis via AAA pathway; L-alpha-aminoadipate from 2-oxoglutarate: step 3/5. In terms of biological role, catalyzes the reversible hydration of cis-homoaconitate to (2R,3S)-homoisocitrate, a step in the alpha-aminoadipate pathway for lysine biosynthesis. The polypeptide is Homoaconitase, mitochondrial (LYS4) (Eremothecium gossypii (strain ATCC 10895 / CBS 109.51 / FGSC 9923 / NRRL Y-1056) (Yeast)).